The sequence spans 458 residues: F-box/FBD/LRR-repeat protein At1g78750 (458 aa).

Residues 17–67 (VDWISNLPETLLCQVLFYLPTKDVVKSSVLSSRWRNLWKYVPGFNLSYCDF) form the F-box domain. LRR repeat units follow at residues 152–183 (CETL…HLSI), 184–209 (VKFA…NINR), 231–258 (VADT…RLSD), 302–327 (DFLV…YDYS), and 345–370 (FYGY…VVGS). Positions 376–428 (KEGINILSVPRGFLSSLEYVKIERPLKGEAMEMKLVSYLLENSTILKKLTLCL) constitute an FBD domain.

The chain is F-box/FBD/LRR-repeat protein At1g78750 from Arabidopsis thaliana (Mouse-ear cress).